The chain runs to 58 residues: Ribosome biogenesis protein Nop10 (58 aa).

Belongs to the NOP10 family.

In terms of biological role, involved in ribosome biogenesis; more specifically in 18S rRNA pseudouridylation and in cleavage of pre-rRNA. The chain is Ribosome biogenesis protein Nop10 from Methanobrevibacter smithii (strain ATCC 35061 / DSM 861 / OCM 144 / PS).